The chain runs to 355 residues: MPNPPEYEHLKNQVRILSLNGGGARGLFTISLLAEIERIIEEKQGINGFKVGDYFDLITGTSIGGILALGLAYGKSARELEDVFRKQAGYIFPEQKYPRFFPVFRRRYRLARGPLYDSKPLAKTIASMVGEESTFNDLKCRVLIPTVNLSTGKPQFFKTPHNPEFHRDGRIKLIDAALATSAAPTYFAPHYCVDLDSYFADGGLVANNPSFIGLHEVFRDMATDFPEAKVSDVKILNVGTLGEEYSLSPSSLAGKSGYLGLWGMGERLVLSAMAANQELHKAMLLREFATHDAIGNFVRLDNNIPHEAASDITLDNASASSLSNLASRGRQLATEEFTKNKALADFFKVPARKFK.

Positions 17-214 (LSLNGGGARG…VANNPSFIGL (198 aa)) constitute a PNPLA domain. The GXGXXG signature appears at 21-26 (GGGARG). The short motif at 60–64 (GTSIG) is the GXSXG element. Catalysis depends on S62, which acts as the Nucleophile. D201 serves as the catalytic Proton acceptor. Residues 201-203 (DGG) carry the DGA/G motif.

Belongs to the patatin family.

It catalyses the reaction a 1,2-diacyl-sn-glycero-3-phosphocholine + H2O = a 2-acyl-sn-glycero-3-phosphocholine + a fatty acid + H(+). The enzyme catalyses 1,2-di-(9Z-octadecenoyl)-sn-glycero-3-phosphoethanolamine + 2 H2O = sn-glycero-3-phosphoethanolamine + 2 (9Z)-octadecenoate + 2 H(+). With respect to regulation, phospholipase activity is specifically activated upon 3',3'-cGAMP (cGAMP) binding. Is not activated by the other cyclic dinucleotides 3',3'-cUAMP, 3',3'-c-diAMP and 3',3'-c-diGMP. Therefore, is specifically activated by only the nucleotide synthesized from its adjacently encoded nucleotidyltransferase (DncV). The cGAMP-activation of lipase is inhibited by T4 phage protein Acb2 (Vs.4). In terms of biological role, effector phospholipase of a CBASS antiviral system. CBASS (cyclic oligonucleotide-based antiphage signaling system) provides immunity against bacteriophages. The CD-NTase protein (DncV) synthesizes cyclic nucleotides in response to infection; these serve as specific second messenger signals. The signals activate a diverse range of effectors, leading to bacterial cell death and thus abortive phage infection. A type II-A(GA) CBASS system. Phospholipase that is activated upon binding to the cyclic dinucleotide (CDN) second messenger 3',3'-cyclic GMP-AMP (3',3'-cGAMP). Then degrades phosphatidylethanolamine (PE) and phosphatidylglycerol (PG), the major phospholipids in the cell membrane of V.cholerae, releasing 16:1 and 18:1 free fatty acids. Upon expression in E.coli with cognate DncV, the cell inner membrane shrinks and separates from the cell wall. Its function is as follows. Protects E.coli against phage infection. When the CBASS operon (capV-dncV-cap2-cap3) is introduced in E.coli MG1655 there is about 100-fold protection against phages P1 and T2. When the operon is introduced in E.coli MG1655 there is a more than 10(3) decrease in the efficiency of T2 plaque formation. Protects 100-fold against phage T5, offers no protection against T7. When the operon is introduced in E.coli MG1655 it protects against phages T2, T4, T5 and T6. Another paper shows the operon confers protection against phages P1, T2, T5 and T6 but not T4 or lambda. This Vibrio cholerae serotype O1 (strain ATCC 39315 / El Tor Inaba N16961) protein is cGAMP-activated phospholipase.